The chain runs to 102 residues: MYAIIKHSGKQYKVSVGDDLKLDHFEAESKASIEVSEVLAINDKELKVGAPFVAGAKVVLEVINHGKDKKVVIYKKRRRKDSKLKRGFRRQFTRVVVKDIKA.

It belongs to the bacterial ribosomal protein bL21 family. In terms of assembly, part of the 50S ribosomal subunit. Contacts protein L20.

Its function is as follows. This protein binds to 23S rRNA in the presence of protein L20. The sequence is that of Large ribosomal subunit protein bL21 from Campylobacter jejuni subsp. doylei (strain ATCC BAA-1458 / RM4099 / 269.97).